Consider the following 395-residue polypeptide: NAD(P)H-quinone oxidoreductase subunit H (395 aa).

This sequence belongs to the complex I 49 kDa subunit family. In terms of assembly, NDH-1 can be composed of about 15 different subunits; different subcomplexes with different compositions have been identified which probably have different functions.

The protein resides in the cellular thylakoid membrane. It catalyses the reaction a plastoquinone + NADH + (n+1) H(+)(in) = a plastoquinol + NAD(+) + n H(+)(out). The enzyme catalyses a plastoquinone + NADPH + (n+1) H(+)(in) = a plastoquinol + NADP(+) + n H(+)(out). Functionally, NDH-1 shuttles electrons from an unknown electron donor, via FMN and iron-sulfur (Fe-S) centers, to quinones in the respiratory and/or the photosynthetic chain. The immediate electron acceptor for the enzyme in this species is believed to be plastoquinone. Couples the redox reaction to proton translocation, and thus conserves the redox energy in a proton gradient. Cyanobacterial NDH-1 also plays a role in inorganic carbon-concentration. The chain is NAD(P)H-quinone oxidoreductase subunit H from Prochlorococcus marinus (strain MIT 9312).